We begin with the raw amino-acid sequence, 314 residues long: Oxaloacetate tautomerase FAHD2A, mitochondrial (314 aa).

Residues 1–84 constitute a mitochondrion transit peptide; sequence MLGSSGRRLL…ATLSVVRRAL (84 aa). Glutamate 159, glutamate 161, and aspartate 190 together coordinate Mg(2+).

This sequence belongs to the FAH family. Requires Mg(2+) as cofactor. Mn(2+) is required as a cofactor.

It is found in the mitochondrion. The catalysed reaction is oxaloacetate = enol-oxaloacetate. In terms of biological role, tautomerase that converts enol-oxaloacetate, a strong inhibitor of succinate dehydrogenase, to the physiological keto form of oxaloacetate. It is thereby required to maximize aerobic respiration efficiency by preventing succinate dehydrogenase inhibition. The protein is Oxaloacetate tautomerase FAHD2A, mitochondrial of Bos taurus (Bovine).